A 358-amino-acid polypeptide reads, in one-letter code: C-X-C chemokine receptor type 4-A (358 aa).

The tract at residues 1 to 25 is important for chemokine binding and signaling; it reads MDGFSGGIDINIFDGNSTENGSGDF. Topologically, residues 1-44 are extracellular; that stretch reads MDGFSGGIDINIFDGNSTENGSGDFEDFIEPCFMHENSDFNRIF. N16 and N20 each carry an N-linked (GlcNAc...) asparagine glycan. Intrachain disulfides connect C32/C281 and C113/C190. A helical membrane pass occupies residues 45 to 67; it reads LPTIYSFIFLLGIIGNGLVVVVM. Residues 68-81 are Cytoplasmic-facing; it reads GYQKKSRTMTDKYR. The helical transmembrane segment at 82 to 103 threads the bilayer; that stretch reads LHLSVADLLFVFTLPFWSVDAA. The segment at 98–101 is chemokine binding; that stretch reads WSVD. Over 104-114 the chain is Extracellular; that stretch reads IGWYFKEFLCK. The chain crosses the membrane as a helical span at residues 115-134; the sequence is AVHVIYTVNLYSSVLILAFI. Residues 117–121 are chemokine binding; sequence HVIYT. The Cytoplasmic portion of the chain corresponds to 135 to 158; sequence SLDRYLAIVHATNSQGSRKMLADK. An involved in dimerization; when bound to chemokine region spans residues 139 to 151; sequence YLAIVHATNSQGS. Residues 159-178 traverse the membrane as a helical segment; sequence VVYAGVWLPALLLTVPDLVF. The Extracellular segment spans residues 179–202; the sequence is ARVSDENGQFVCDRIYPIENRETW. Positions 190-194 are chemokine binding, important for signaling; sequence CDRIY. The chain crosses the membrane as a helical span at residues 203–223; sequence TVGFRFLHITVGLILPGLIIL. Over 224 to 248 the chain is Cytoplasmic; it reads ICYCVIISKLSHSKGHQKRKALKTT. The chain crosses the membrane as a helical span at residues 249–268; it reads VILILAFFACWLPYYVCLTT. The Extracellular portion of the chain corresponds to 269–289; sequence DTFMLLGLVKGDCIWENTLHM. Residues 290 to 309 form a helical membrane-spanning segment; that stretch reads AISITEALAFFHCCLNPILY. Topologically, residues 310-358 are cytoplasmic; it reads AFLGAKFKTSAQNAFTSVSRGSSLKILSKKRAGLSSVSTESESSSFHSS. A disordered region spans residues 338–358; that stretch reads KKRAGLSSVSTESESSSFHSS. A compositionally biased stretch (low complexity) spans 344–358; the sequence is SSVSTESESSSFHSS.

This sequence belongs to the G-protein coupled receptor 1 family. Monomer. Can form dimers. Post-translationally, sulfation is required for efficient binding of cxcl12/sdf-1alpha and promotes its dimerization. O- and N-glycosylated. Highly expressed in the embryonic nervous system including forebrain, hindbrain and sensory organs (including eye), and in neural crest cells. Also expressed in the dorsal lateral plate, the first site of definitive hematopoiesis in the embryo. Appears in migrating presumptive primordial germ cells (pPGCs) from stage 24. Expressed in the epidermis at stage 40. In the adult, highly expressed in the spleen with lower levels of expression in the liver and very low levels in kidney, heart, skin and brain.

The protein resides in the cell membrane. Its subcellular location is the cytoplasm. It is found in the nucleus. The protein localises to the early endosome. It localises to the late endosome. The protein resides in the lysosome. In terms of biological role, receptor for the C-X-C chemokine cxcl12/sdf-1. Transduces a signal by increasing the intracellular level of calcium ions. Signaling with cxcl12/sdf-1 mediates the directional movement of mesodermal cells during gastrulation. May play a role in the migration of embryonic presumptive primordial germ cells (pPGCs). May also be involved in regulating the migration of hematopoietic stem cells into the larval liver. The chain is C-X-C chemokine receptor type 4-A (cxcr4-a) from Xenopus laevis (African clawed frog).